The following is a 766-amino-acid chain: Serine/threonine-protein kinase B-raf (766 aa).

Over residues 1–13 (MAALSGGGGGGAE) the composition is skewed to gly residues. The interval 1-38 (MAALSGGGGGGAEPGQALFNGDMEPEAGAGAGAAASSA) is disordered. An N-acetylalanine modification is found at Ala-2. Ser-151 is subject to Phosphoserine. The region spanning 155–227 (PIVRVFLPNK…TGEELHVEVL (73 aa)) is the RBD domain. The segment at 234-280 (THNFVRKTFFTLAFCDFCRKLLFQGFRCQTCGYKFHQRCSTEVPLMC) adopts a Phorbol-ester/DAG-type zinc-finger fold. Zn(2+) contacts are provided by His-235, Cys-248, Cys-251, Cys-261, Cys-264, His-269, Cys-272, and Cys-280. A disordered region spans residues 308 to 454 (AETALTSGSS…DSSDDWEIPD (147 aa)). The span at 314–341 (SGSSPSAPASDSIGPQILTSPSPSKSIP) shows a compositional bias: low complexity. At Ser-333 the chain carries Phosphoserine. The segment covering 348–363 (PADEDHRNQFGQRDRS) has biased composition (basic and acidic residues). Phosphoserine; by SGK1 is present on Ser-365. At Thr-373 the chain carries Phosphothreonine; by autocatalysis. Phosphothreonine is present on Thr-396. Residue Ser-399 is modified to Phosphoserine. Thr-401 bears the Phosphothreonine mark. Residues 423–447 (QRERKSSSSSEDRNRMKTLGRRDSS) are compositionally biased toward basic and acidic residues. 2 positions are modified to phosphoserine: Ser-446 and Ser-447. Residues 457–717 (ITVGQRIGSG…PQILASIELL (261 aa)) form the Protein kinase domain. ATP is bound by residues 463–471 (IGSGSFGTV) and Lys-483. The active-site Proton acceptor is the Asp-576. Residue Lys-578 forms a Glycyl lysine isopeptide (Lys-Gly) (interchain with G-Cter in ubiquitin) linkage. Arg-671 is modified (omega-N-methylarginine; by PRMT5). 2 positions are modified to phosphoserine: Ser-729 and Ser-750. Thr-753 carries the phosphothreonine; by MAPK1 modification.

The protein belongs to the protein kinase superfamily. TKL Ser/Thr protein kinase family. RAF subfamily. In terms of assembly, monomer. Homodimer. Heterodimerizes with RAF1, and the heterodimer possesses a highly increased kinase activity compared to the respective homodimers or monomers. Heterodimerization is mitogen-regulated and enhanced by 14-3-3 proteins. MAPK1/ERK2 activation can induce a negative feedback that promotes the dissociation of the heterodimer by phosphorylating BRAF at Thr-753. Heterodimerizes (via N-terminus) with KSR1 (via N-terminus) or KSR2 (via N-terminus) in a MAP2K1-dependent manner. Interacts with MAP2K1 and MAP2K2. Found in a complex with at least BRAF, HRAS, MAP2K1, MAPK3 and RGS14. Interacts with RIT1. Interacts (via N-terminus) with RGS14 (via RBD domains); the interaction mediates the formation of a ternary complex with RAF1, a ternary complex inhibited by GNAI1. Interacts with DGKH. Interacts with PRMT5. Interacts with KSR2. Interacts with AKAP13, MAP2K1 and KSR1. Identified in a complex with AKAP13, MAP2K1 and KSR1. Interacts with FNIP1 and FNIP2. It depends on Zn(2+) as a cofactor. Phosphorylation at Ser-365 by SGK1 inhibits its activity. Phosphorylation at Thr-753 by MAPK1. Dephosphorylation of Ser-365 by the SHOC2-MRAS-PP1c (SMP) complex consisting of SHOC2, GTP-bound M-Ras/MRAS and the catalytic subunit of protein phosphatase 1 (PPP1CA, PPP1CB or PPP1CC); this relieves inactivation and stimulates kinase activity. In terms of processing, methylation at Arg-671 decreases stability and kinase activity. Post-translationally, ubiquitinated by RNF149; which leads to proteasomal degradation. Polyubiquitinated at Lys-578 in response to EGF. As to expression, brain and testis.

It is found in the nucleus. The protein resides in the cytoplasm. It localises to the cell membrane. The enzyme catalyses L-seryl-[protein] + ATP = O-phospho-L-seryl-[protein] + ADP + H(+). It catalyses the reaction L-threonyl-[protein] + ATP = O-phospho-L-threonyl-[protein] + ADP + H(+). In quiescent cells, maintained in an inactive state via an intramolecular interaction between the protein kinase and N-terminal domains. Following mitogen-mediated cell activation, binds via its RGB domain to active HRAS (GTP-bound) which releases the inhibitory intramolecular interaction between the two domains. This allows the MAP2K1-mediated dimerization of KSR1 or KSR2, and BRAF which activates BRAF. Its function is as follows. Protein kinase involved in the transduction of mitogenic signals from the cell membrane to the nucleus. Phosphorylates MAP2K1, and thereby activates the MAP kinase signal transduction pathway. Phosphorylates PFKFB2. May play a role in the postsynaptic responses of hippocampal neurons. This is Serine/threonine-protein kinase B-raf from Homo sapiens (Human).